Here is a 114-residue protein sequence, read N- to C-terminus: Large ribosomal subunit protein uL24 (114 aa).

Belongs to the universal ribosomal protein uL24 family. As to quaternary structure, part of the 50S ribosomal subunit.

In terms of biological role, one of two assembly initiator proteins, it binds directly to the 5'-end of the 23S rRNA, where it nucleates assembly of the 50S subunit. Functionally, one of the proteins that surrounds the polypeptide exit tunnel on the outside of the subunit. In Thermomicrobium roseum (strain ATCC 27502 / DSM 5159 / P-2), this protein is Large ribosomal subunit protein uL24.